A 1382-amino-acid polypeptide reads, in one-letter code: ATP-dependent RNA helicase TDRD9 (1382 aa).

The tract at residues 36-62 (AAREEVQRQDVAPGAGPAAQAPALAQA) is disordered. Residues 47–62 (APGAGPAAQAPALAQA) are compositionally biased toward low complexity. Positions 142–308 (VSLIESNSVV…FAVPVQNKMN (167 aa)) constitute a Helicase ATP-binding domain. Residue 155 to 162 (GATGSGKS) coordinates ATP. The DEAH box signature appears at 254-257 (DEVH). One can recognise a Helicase C-terminal domain in the interval 377 to 544 (SGAQFVLERS…ILKVKLLDMG (168 aa)). The Tudor domain maps to 944–1004 (HPHPDLVCLA…MEIPCQFLEL (61 aa)).

The protein belongs to the DEAD box helicase family. DEAH subfamily. In terms of assembly, interacts with piRNA-associated proteins PIWIL1 and PIWIL4.

It is found in the cytoplasm. It localises to the nucleus. The enzyme catalyses ATP + H2O = ADP + phosphate + H(+). In terms of biological role, ATP-binding RNA helicase required during spermatogenesis. Required to repress transposable elements and prevent their mobilization, which is essential for the germline integrity. Acts via the piRNA metabolic process, which mediates the repression of transposable elements during meiosis by forming complexes composed of piRNAs and Piwi proteins and governs the methylation and subsequent repression of transposons. Acts downstream of piRNA biogenesis: exclusively required for transposon silencing in the nucleus, suggesting that it acts as a nuclear effector in the nucleus together with PIWIL4. The sequence is that of ATP-dependent RNA helicase TDRD9 from Homo sapiens (Human).